A 418-amino-acid polypeptide reads, in one-letter code: NADH-quinone oxidoreductase subunit D (418 aa).

It belongs to the complex I 49 kDa subunit family. NDH-1 is composed of 14 different subunits. Subunits NuoB, C, D, E, F, and G constitute the peripheral sector of the complex.

It is found in the cell inner membrane. It carries out the reaction a quinone + NADH + 5 H(+)(in) = a quinol + NAD(+) + 4 H(+)(out). In terms of biological role, NDH-1 shuttles electrons from NADH, via FMN and iron-sulfur (Fe-S) centers, to quinones in the respiratory chain. The immediate electron acceptor for the enzyme in this species is believed to be ubiquinone. Couples the redox reaction to proton translocation (for every two electrons transferred, four hydrogen ions are translocated across the cytoplasmic membrane), and thus conserves the redox energy in a proton gradient. The chain is NADH-quinone oxidoreductase subunit D from Neisseria meningitidis serogroup C / serotype 2a (strain ATCC 700532 / DSM 15464 / FAM18).